The chain runs to 175 residues: NADH-ubiquinone oxidoreductase chain 6 (175 aa).

5 helical membrane passes run methionine 1–serine 21, isoleucine 26–leucine 46, glycine 47–phenylalanine 67, valine 87–isoleucine 107, and tryptophan 152–threonine 172.

It belongs to the complex I subunit 6 family.

It is found in the mitochondrion membrane. The catalysed reaction is a ubiquinone + NADH + 5 H(+)(in) = a ubiquinol + NAD(+) + 4 H(+)(out). Its function is as follows. Core subunit of the mitochondrial membrane respiratory chain NADH dehydrogenase (Complex I) that is believed to belong to the minimal assembly required for catalysis. Complex I functions in the transfer of electrons from NADH to the respiratory chain. The immediate electron acceptor for the enzyme is believed to be ubiquinone. In Dasypus novemcinctus (Nine-banded armadillo), this protein is NADH-ubiquinone oxidoreductase chain 6 (MT-ND6).